Here is a 564-residue protein sequence, read N- to C-terminus: MTRLQDDFYDAINGEWAKTAVIPDDKPVTGGFMDLAEEIEDLMLSTTDKWLAGDGVPEDAILQNFVAYHRLAADYDKREAAGTEPARAYIDEIRNLASFEEYASKIADFELAGKPTYFPFGVAPDFMDARINVLWADGPGTILPDTTYYAEDHPQKADLLAKWRKAQEDLLAKFDFTEEEIKDLLDKVLDLDAVFAQYVLSNEESSEYAKLYHPYKWDDFKALVPELPLTDIFTKLIGQEPDQVIVPEERFWKAAKDIYTAANWDKLHALLILSAVRNTTPYLTDDIRVLAGAYQRALSGTPQAQDKKKAAYYLAQGPFNQAIGLWYAGQKFSPEAKADVEQKVVTMIEVYKNRLAQNDWLTPETRDKAIVKLNVIKPYIGYPDELPERYSRKIVDENLTLFENAQKLSLIDIAYSWSKWNQPVDYKEWGMPAHMVNAYYNPQKNLIVFPAAILQAPFYDLHQSSSANYGGIGAVIAHEISHAFDTNGASFDENGSLNNWWTEHDYQAFTERTQKVIDQFEGQDSYGAKVNGKLTVSENVADLGGIAAALEAAKKEADFSAEEF.

The region spanning 1 to 564 (MTRLQDDFYD…KEADFSAEEF (564 aa)) is the Peptidase M13 domain. Histidine 478 contacts Zn(2+). Glutamate 479 is an active-site residue. Residues histidine 482 and glutamate 538 each contribute to the Zn(2+) site. The Proton donor role is filled by aspartate 542.

The protein belongs to the peptidase M13 family. Zn(2+) serves as cofactor.

The chain is Putative zinc metalloproteinase in scaA 5'region from Streptococcus gordonii (strain Challis / ATCC 35105 / BCRC 15272 / CH1 / DL1 / V288).